We begin with the raw amino-acid sequence, 185 residues long: Ribosome-recycling factor (185 aa).

The protein belongs to the RRF family.

The protein localises to the cytoplasm. Responsible for the release of ribosomes from messenger RNA at the termination of protein biosynthesis. May increase the efficiency of translation by recycling ribosomes from one round of translation to another. The protein is Ribosome-recycling factor of Shewanella baltica (strain OS185).